Reading from the N-terminus, the 171-residue chain is Large ribosomal subunit protein uL10 (171 aa).

This sequence belongs to the universal ribosomal protein uL10 family. In terms of assembly, part of the ribosomal stalk of the 50S ribosomal subunit. The N-terminus interacts with L11 and the large rRNA to form the base of the stalk. The C-terminus forms an elongated spine to which L12 dimers bind in a sequential fashion forming a multimeric L10(L12)X complex.

Its function is as follows. Forms part of the ribosomal stalk, playing a central role in the interaction of the ribosome with GTP-bound translation factors. This Maricaulis maris (strain MCS10) (Caulobacter maris) protein is Large ribosomal subunit protein uL10.